The primary structure comprises 316 residues: Ribosomal RNA small subunit methyltransferase H (316 aa).

S-adenosyl-L-methionine-binding positions include 35–37 (AGH), aspartate 55, phenylalanine 84, aspartate 105, and glutamine 112.

It belongs to the methyltransferase superfamily. RsmH family.

It localises to the cytoplasm. The catalysed reaction is cytidine(1402) in 16S rRNA + S-adenosyl-L-methionine = N(4)-methylcytidine(1402) in 16S rRNA + S-adenosyl-L-homocysteine + H(+). Specifically methylates the N4 position of cytidine in position 1402 (C1402) of 16S rRNA. In Streptococcus pneumoniae serotype 4 (strain ATCC BAA-334 / TIGR4), this protein is Ribosomal RNA small subunit methyltransferase H.